Here is a 384-residue protein sequence, read N- to C-terminus: MLPFIRSDLAQFNAYKPHPSSDTASAVPPQLDRLDTNESPYDLPPELKQKLAWTFQQVIESNRYPDGGHETLKSAIAEYVNESANISSLRFTAANISVGNGSDELIRSLLIATCLSGEGSILVANPTFSMYGILAQTLGIPVVSVSRNPDNFAIDLTAAQSAIEQTLNPPIRVVFVVHPNSPTANPLTANELRWLKSLSERILVVVDEAYFEFSQNTLVSELAQRPNWIILRTFSKAFRLAAMRVGYCVAHPEAIAILEKVRLPYNLPSFSIASALVALQNRAILLESIPQTLDERTKLINAFSQHPALAVAESAANFIFLRLKADSDNSSDTTLLNLHQQLKNSGTLVRQISGGLRITIGTPEENIRTLNHIQTALIKPELVG.

Residue Lys-236 is modified to N6-(pyridoxal phosphate)lysine.

This sequence belongs to the class-II pyridoxal-phosphate-dependent aminotransferase family. Histidinol-phosphate aminotransferase subfamily. As to quaternary structure, homodimer. Pyridoxal 5'-phosphate serves as cofactor.

It catalyses the reaction L-histidinol phosphate + 2-oxoglutarate = 3-(imidazol-4-yl)-2-oxopropyl phosphate + L-glutamate. It functions in the pathway amino-acid biosynthesis; L-histidine biosynthesis; L-histidine from 5-phospho-alpha-D-ribose 1-diphosphate: step 7/9. This is Histidinol-phosphate aminotransferase 2 (hisC2) from Nostoc sp. (strain PCC 7120 / SAG 25.82 / UTEX 2576).